Here is a 151-residue protein sequence, read N- to C-terminus: Ubiquitin-like protein 4A-B (151 aa).

The Ubiquitin-like domain maps to 1–76; the sequence is MILTIKPLQG…LNLVVRPAGE (76 aa).

In terms of assembly, component of the BAT3 complex.

Its subcellular location is the cytoplasm. The protein localises to the cytosol. Its function is as follows. Component of the BAT3 complex, a multiprotein complex involved in the post-translational delivery of tail-anchored (TA) membrane proteins to the endoplasmic reticulum membrane. TA membrane proteins, also named type II transmembrane proteins, contain a single C-terminal transmembrane region. The sequence is that of Ubiquitin-like protein 4A-B (ubl4ab) from Salmo salar (Atlantic salmon).